We begin with the raw amino-acid sequence, 124 residues long: Small ribosomal subunit protein uS12 (124 aa).

Residues 1 to 24 are disordered; sequence MPTINQLVRQGRKKSVKKTNTPAL. Asp-89 bears the 3-methylthioaspartic acid mark.

Belongs to the universal ribosomal protein uS12 family. As to quaternary structure, part of the 30S ribosomal subunit. Contacts proteins S8 and S17. May interact with IF1 in the 30S initiation complex.

In terms of biological role, with S4 and S5 plays an important role in translational accuracy. Functionally, interacts with and stabilizes bases of the 16S rRNA that are involved in tRNA selection in the A site and with the mRNA backbone. Located at the interface of the 30S and 50S subunits, it traverses the body of the 30S subunit contacting proteins on the other side and probably holding the rRNA structure together. The combined cluster of proteins S8, S12 and S17 appears to hold together the shoulder and platform of the 30S subunit. This Desulfotalea psychrophila (strain LSv54 / DSM 12343) protein is Small ribosomal subunit protein uS12.